Consider the following 297-residue polypeptide: Adrenocorticotropic hormone receptor (297 aa).

Residues 1–23 (MKHITDLYESVNSTMSNKSDCPP) are Extracellular-facing. N-linked (GlcNAc...) asparagine glycosylation is found at N12 and N17. Disulfide bonds link C21–C253 and C245–C251. The helical transmembrane segment at 24–49 (VVLPEEVFFTISVIGVLENLIVLLAV) threads the bilayer. Residues 50–58 (IKNKNLQSP) lie on the Cytoplasmic side of the membrane. Residues 59–79 (MYFFICSLAISDMLGSLYKIL) traverse the membrane as a helical segment. At 80–104 (ENILIIFRNMGYLEPRGGFESTADD) the chain is on the extracellular side. The helical transmembrane segment at 105–126 (VVDSLFILSLLGSICSLSAIAA) threads the bilayer. Over 127-147 (DRYITIFHALQYQRLVTPRRA) the chain is Cytoplasmic. A helical transmembrane segment spans residues 148-168 (AVVLLIIWACCIGSGITIVTF). Residues 169–180 (SHHVPAVIAFTA) are Extracellular-facing. The chain crosses the membrane as a helical span at residues 181 to 199 (LFPLMLVFILCLYGHMFLL). The Cytoplasmic portion of the chain corresponds to 200–217 (ARSHARRVSTLPRANMKG). Residues 218-244 (AITLTVLLGVFIFCWAPFVLHILLMTF) traverse the membrane as a helical segment. Topologically, residues 245–256 (CPADPYCACYLA) are extracellular. Residues 257–278 (LFQVNAVLIMCNAIIDPFIYAF) traverse the membrane as a helical segment. Residues 279–297 (RSPELRDAFKKMIICKRYP) lie on the Cytoplasmic side of the membrane. The S-palmitoyl cysteine moiety is linked to residue C293.

The protein belongs to the G-protein coupled receptor 1 family. Homodimer. Interacts with corticotropin (ACTH). Interacts with MRAP; this interaction targets MC2R to the plasma membrane. Interacts with MRAP2; competing with MRAP for binding to MC2R and impairing the binding of corticotropin (ACTH). Post-translationally, ubiquitinated by MGRN1 that may be involved in post-endocytic trafficking and/or degradation of internalized receptor. Expressed in skin and adrenal gland tissues.

The protein localises to the cell membrane. Its function is as follows. Hormone receptor primarily expressed in adrenal cortex that plays a key role in regulating adrenocortical function. Upon corticotropin (ACTH) binding, facilitates the release of adrenal glucocorticoids, including cortisol and corticosterone. In addition, MC2R is required for fetal and neonatal adrenal gland development. Mechanistically, activates adenylate cyclase (cAMP), the MAPK cascade as well as the cAMP-dependent protein kinase A pathway leading to steroidogenic factor 1/NR5A1-mediated transcriptional activation. This Sus scrofa (Pig) protein is Adrenocorticotropic hormone receptor (MC2R).